The primary structure comprises 140 residues: MVSKQSKQAGRLPKRKEEFTYRGLTIAEMKKLDMNQVAALLPARQRRKIKREFGEEHQKLLNAVKAGETKIKTHLRDMIILPEMVGVTFEIHNGKEWKAVETTPEMVGHYLGEFALTRHSVSHGSAGIGATRGSKYVPLK.

Belongs to the universal ribosomal protein uS19 family.

Functionally, protein S19 forms a complex with S13 that binds strongly to the 16S ribosomal RNA. The protein is Small ribosomal subunit protein uS19 of Methanocella arvoryzae (strain DSM 22066 / NBRC 105507 / MRE50).